Consider the following 836-residue polypeptide: Serine/threonine-protein kinase ATG1 (836 aa).

In terms of domain architecture, Protein kinase spans tyrosine 21–valine 321. ATP is bound by residues isoleucine 27 to valine 35 and lysine 50. The active-site Proton acceptor is the aspartate 168. Disordered stretches follow at residues glutamate 387–arginine 425, asparagine 458–arginine 489, and cysteine 619–alanine 642. Residues leucine 395 to glutamine 404 are compositionally biased toward low complexity. Polar residues-rich tracts occupy residues arginine 411 to arginine 425, asparagine 459 to alanine 468, and glycine 630 to proline 640. Residues isoleucine 571–serine 836 are interaction with ATG13.

The protein belongs to the protein kinase superfamily. Ser/Thr protein kinase family. APG1/unc-51/ULK1 subfamily. Homodimer. Dimerization requires the presence of ATG13. Forms a ternary complex with ATG13 and ATG17.

It is found in the cytoplasm. Its subcellular location is the preautophagosomal structure membrane. It carries out the reaction L-seryl-[protein] + ATP = O-phospho-L-seryl-[protein] + ADP + H(+). It catalyses the reaction L-threonyl-[protein] + ATP = O-phospho-L-threonyl-[protein] + ADP + H(+). Serine/threonine protein kinase involved in the cytoplasm to vacuole transport (Cvt) and found to be essential in autophagy, where it is required for the formation of autophagosomes. Involved in the clearance of protein aggregates which cannot be efficiently cleared by the proteasome. Required for selective autophagic degradation of the nucleus (nucleophagy) as well as for mitophagy which contributes to regulate mitochondrial quantity and quality by eliminating the mitochondria to a basal level to fulfill cellular energy requirements and preventing excess ROS production. Also involved in endoplasmic reticulum-specific autophagic process, in selective removal of ER-associated degradation (ERAD) substrates. Plays a key role in ATG9 and ATG23 cycling through the pre-autophagosomal structure and is necessary to promote ATG18 binding to ATG9 through phosphorylation of ATG9. Catalyzes phosphorylation of ATG4, decreasing the interaction between ATG4 and ATG8 and impairing deconjugation of PE-conjugated forms of ATG8. This chain is Serine/threonine-protein kinase ATG1, found in Kluyveromyces marxianus (strain DMKU3-1042 / BCC 29191 / NBRC 104275) (Yeast).